A 289-amino-acid polypeptide reads, in one-letter code: 4-diphosphocytidyl-2-C-methyl-D-erythritol kinase (289 aa).

K15 is a catalytic residue. Position 100 to 110 (100 to 110 (PVSAGLAGGSA)) interacts with ATP. The active site involves D140.

This sequence belongs to the GHMP kinase family. IspE subfamily.

The enzyme catalyses 4-CDP-2-C-methyl-D-erythritol + ATP = 4-CDP-2-C-methyl-D-erythritol 2-phosphate + ADP + H(+). The protein operates within isoprenoid biosynthesis; isopentenyl diphosphate biosynthesis via DXP pathway; isopentenyl diphosphate from 1-deoxy-D-xylulose 5-phosphate: step 3/6. In terms of biological role, catalyzes the phosphorylation of the position 2 hydroxy group of 4-diphosphocytidyl-2C-methyl-D-erythritol. This chain is 4-diphosphocytidyl-2-C-methyl-D-erythritol kinase, found in Anaplasma marginale (strain Florida).